The primary structure comprises 598 residues: NADH-quinone oxidoreductase subunit C/D (598 aa).

The NADH dehydrogenase I subunit C stretch occupies residues 1-189 (MTDLTTSDSL…DPYVLTKQKE (189 aa)). Residues 213–598 (DFMFLNLGPN…IDFVMSDVDR (386 aa)) are NADH dehydrogenase I subunit D.

In the N-terminal section; belongs to the complex I 30 kDa subunit family. It in the C-terminal section; belongs to the complex I 49 kDa subunit family. In terms of assembly, NDH-1 is composed of 13 different subunits. Subunits NuoB, CD, E, F, and G constitute the peripheral sector of the complex.

It localises to the cell inner membrane. The catalysed reaction is a quinone + NADH + 5 H(+)(in) = a quinol + NAD(+) + 4 H(+)(out). In terms of biological role, NDH-1 shuttles electrons from NADH, via FMN and iron-sulfur (Fe-S) centers, to quinones in the respiratory chain. The immediate electron acceptor for the enzyme in this species is believed to be ubiquinone. Couples the redox reaction to proton translocation (for every two electrons transferred, four hydrogen ions are translocated across the cytoplasmic membrane), and thus conserves the redox energy in a proton gradient. The protein is NADH-quinone oxidoreductase subunit C/D of Yersinia pestis bv. Antiqua (strain Angola).